Here is a 729-residue protein sequence, read N- to C-terminus: Polyribonucleotide nucleotidyltransferase (729 aa).

Positions 509 and 515 each coordinate Mg(2+). The KH domain occupies 575–634 (PRVISVKIPVDKIGEVIGPKGKMINQIQADSGAEITVEDDGTIYIGAVDGPSAESARSAI). The S1 motif domain maps to 646–718 (GERYLGTIVK…SRGKISLSPS (73 aa)).

This sequence belongs to the polyribonucleotide nucleotidyltransferase family. Mg(2+) is required as a cofactor.

The protein localises to the cytoplasm. It carries out the reaction RNA(n+1) + phosphate = RNA(n) + a ribonucleoside 5'-diphosphate. Functionally, involved in mRNA degradation. Catalyzes the phosphorolysis of single-stranded polyribonucleotides processively in the 3'- to 5'-direction. In Frankia casuarinae (strain DSM 45818 / CECT 9043 / HFP020203 / CcI3), this protein is Polyribonucleotide nucleotidyltransferase.